A 249-amino-acid polypeptide reads, in one-letter code: 2,3,4,5-tetrahydropyridine-2,6-dicarboxylate N-acetyltransferase (249 aa).

It belongs to the transferase hexapeptide repeat family. DapH subfamily.

It catalyses the reaction (S)-2,3,4,5-tetrahydrodipicolinate + acetyl-CoA + H2O = L-2-acetamido-6-oxoheptanedioate + CoA. It functions in the pathway amino-acid biosynthesis; L-lysine biosynthesis via DAP pathway; LL-2,6-diaminopimelate from (S)-tetrahydrodipicolinate (acetylase route): step 1/3. Its function is as follows. Catalyzes the transfer of an acetyl group from acetyl-CoA to tetrahydrodipicolinate. This chain is 2,3,4,5-tetrahydropyridine-2,6-dicarboxylate N-acetyltransferase, found in Fervidobacterium nodosum (strain ATCC 35602 / DSM 5306 / Rt17-B1).